Consider the following 245-residue polypeptide: 8-amino-3,8-dideoxy-manno-octulosonate cytidylyltransferase (245 aa).

This sequence belongs to the KdsB family.

The protein resides in the cytoplasm. The catalysed reaction is 8-amino-3,8-dideoxy-alpha-D-manno-octulosonate + CTP = CMP-8-amino-3,8-dideoxy-alpha-D-manno-oct-2-ulosonate + diphosphate. The protein operates within bacterial outer membrane biogenesis; lipopolysaccharide biosynthesis. In terms of biological role, activates KDO8N (a required 8-carbon sugar) for incorporation into bacterial lipopolysaccharide in the Shewanella genus. The chain is 8-amino-3,8-dideoxy-manno-octulosonate cytidylyltransferase from Shewanella baltica (strain OS185).